The primary structure comprises 220 residues: MSLASYIDHTLLKATATLADIRTLCEEAREHSFYAVCINPVFIPHARAWLEGSDVKVATVCGFPLGAISSEQKALEARLSAETGADEIDMVIHIGSALAGDWDAVEADVRAVRRAVPEQVLKVIIETCYLTDEQKRLATEVAVQGGADFVKTSTGFGTGGATVDDVRLMAEVIGGRAGLKAAGGVRTPADAQAMIEAGATRLGTSGGVGLVSGGENGAGY.

The Proton donor/acceptor role is filled by D89. K151 serves as the catalytic Schiff-base intermediate with acetaldehyde. The active-site Proton donor/acceptor is the K180.

It belongs to the DeoC/FbaB aldolase family. DeoC type 1 subfamily.

Its subcellular location is the cytoplasm. The enzyme catalyses 2-deoxy-D-ribose 5-phosphate = D-glyceraldehyde 3-phosphate + acetaldehyde. The protein operates within carbohydrate degradation; 2-deoxy-D-ribose 1-phosphate degradation; D-glyceraldehyde 3-phosphate and acetaldehyde from 2-deoxy-alpha-D-ribose 1-phosphate: step 2/2. Catalyzes a reversible aldol reaction between acetaldehyde and D-glyceraldehyde 3-phosphate to generate 2-deoxy-D-ribose 5-phosphate. The sequence is that of Deoxyribose-phosphate aldolase from Deinococcus radiodurans (strain ATCC 13939 / DSM 20539 / JCM 16871 / CCUG 27074 / LMG 4051 / NBRC 15346 / NCIMB 9279 / VKM B-1422 / R1).